Here is a 229-residue protein sequence, read N- to C-terminus: Uracil-DNA glycosylase (229 aa).

D65 functions as the Proton acceptor in the catalytic mechanism.

It belongs to the uracil-DNA glycosylase (UDG) superfamily. UNG family.

The protein resides in the cytoplasm. It carries out the reaction Hydrolyzes single-stranded DNA or mismatched double-stranded DNA and polynucleotides, releasing free uracil.. In terms of biological role, excises uracil residues from the DNA which can arise as a result of misincorporation of dUMP residues by DNA polymerase or due to deamination of cytosine. In Limosilactobacillus reuteri (strain DSM 20016) (Lactobacillus reuteri), this protein is Uracil-DNA glycosylase.